Reading from the N-terminus, the 158-residue chain is U4/U6.U5 small nuclear ribonucleoprotein 27 kDa protein (158 aa).

Residues 1–30 (MGRSRSRTPPRRERRRSRSSSRDRERRRRE) are compositionally biased toward basic residues. The disordered stretch occupies residues 1 to 100 (MGRSRSRTPP…ISAEDMQGKT (100 aa)). Residues 31–41 (RERSRSRDRDR) are compositionally biased toward basic and acidic residues. Positions 42 to 62 (RRSRSRSPHRRRSRSPRRHRS) are enriched in basic residues. A compositionally biased stretch (basic and acidic residues) spans 69–86 (RQKDRRDDDRKDVKEKPA).

Belongs to the SNUT3 family. As to quaternary structure, part of a tri-snRNP complex.

The protein localises to the nucleus. Its function is as follows. May play a role in mRNA splicing. The protein is U4/U6.U5 small nuclear ribonucleoprotein 27 kDa protein (snrnp27) of Danio rerio (Zebrafish).